The following is a 647-amino-acid chain: NADP-dependent malic enzyme, chloroplastic (647 aa).

The transit peptide at 1–61 directs the protein to the chloroplast; the sequence is MMSLNSSSVV…VDGAVKDVNA (61 aa). Residue tyrosine 195 is the Proton donor of the active site. Arginine 248 lines the NAD(+) pocket. Residue lysine 266 is the Proton acceptor of the active site. Residues glutamate 338, aspartate 339, and aspartate 362 each contribute to the a divalent metal cation site. NAD(+) is bound at residue aspartate 362. 391 to 407 contributes to the NADP(+) binding site; it reads LFLGAGEAGTGIAELIA. NAD(+) is bound at residue asparagine 503.

The protein belongs to the malic enzymes family. Homotetramer. Mg(2+) is required as a cofactor. The cofactor is Mn(2+).

Its subcellular location is the plastid. It localises to the chloroplast. It catalyses the reaction (S)-malate + NADP(+) = pyruvate + CO2 + NADPH. The catalysed reaction is oxaloacetate + H(+) = pyruvate + CO2. It functions in the pathway photosynthesis; C3 acid pathway. The chloroplastic ME isoform decarboxylates malate shuttled from neighboring mesophyll cells. The CO(2) released is then refixed by ribulose-bisphosphate carboxylase. This pathway eliminates the photorespiratory loss of CO(2) that occurs in most plants. This chain is NADP-dependent malic enzyme, chloroplastic (MODA), found in Flaveria pringlei.